We begin with the raw amino-acid sequence, 448 residues long: Carbamoyl phosphate synthase arginine-specific small chain (448 aa).

The transit peptide at 1-27 directs the protein to the mitochondrion; that stretch reads MFKNIARLASMARSAPRTTASFQTRFM. The region spanning 224 to 415 is the Glutamine amidotransferase type-1 domain; sequence HIAVIDCGVK…LGQVHQYRAA (192 aa). The Nucleophile role is filled by cysteine 304. Active-site residues include histidine 388 and glutamate 390.

It belongs to the CarA family. In terms of assembly, heterodimer composed of 2 chains; the small (or glutamine) chain promotes the hydrolysis of glutamine to ammonia, which is used by the large (or ammonia) chain to synthesize carbamoyl phosphate.

The protein localises to the mitochondrion matrix. The enzyme catalyses hydrogencarbonate + L-glutamine + 2 ATP + H2O = carbamoyl phosphate + L-glutamate + 2 ADP + phosphate + 2 H(+). It catalyses the reaction L-glutamine + H2O = L-glutamate + NH4(+). Its pathway is amino-acid biosynthesis; L-arginine biosynthesis; carbamoyl phosphate from bicarbonate: step 1/1. Its function is as follows. Small subunit of the arginine-specific carbamoyl phosphate synthase (CPSase). CPSase catalyzes the formation of carbamoyl phosphate from the ammonia moiety of glutamine, carbonate, and phosphate donated by ATP, the first step of the arginine biosynthetic pathway. The small subunit (glutamine amidotransferase) binds and cleaves glutamine to supply the large subunit with the substrate ammonia. This Yarrowia lipolytica (strain CLIB 122 / E 150) (Yeast) protein is Carbamoyl phosphate synthase arginine-specific small chain (CPA1).